Here is a 445-residue protein sequence, read N- to C-terminus: MLRKGCCVELLLLLLAGELPLGGGCPRDCVCYPAPMTVSCQAHNFAAIPEGIPEDSERIFLQNNRITFLQQGHFSPAMVTLWIYSNNITFIAPNTFEGFVHLEELDLGDNRQLRTLAPETFQGLVKLHALYLYKCGLSALPAGIFGGLHSLQYLYLQDNHIEYLQDDIFVDLVNLSHLFLHGNKLWSLGQGIFRGLVNLDRLLLHENQLQWVHHKAFHDLHRLTTLFLFNNSLTELQGDCLAPLVALEFLRLNGNAWDCGCRARSLWEWLRRFRGSSSAVPCATPELRQGQDLKLLRVEDFRNCTGPVSPHQIKSHTLTTSDRAARKEHHPSHGASRDKGHPHGHPPGSRSGYKKAGKNCTSHRNRNQISKVSSGKELTELQDYAPDYQHKFSFDIMPTARPKRKGKCARRTPIRAPSGVQQASSGTALGAPLLAWILGLAVTLR.

A signal peptide spans 1–24; it reads MLRKGCCVELLLLLLAGELPLGGG. One can recognise an LRRNT domain in the interval 25 to 54; it reads CPRDCVCYPAPMTVSCQAHNFAAIPEGIPE. LRR repeat units follow at residues 55–76, 77–98, 101–123, 126–147, 150–171, 174–195, 198–219, and 222–243; these read DSERIFLQNNRITFLQQGHFSP, AMVTLWIYSNNITFIAPNTFEG, HLEELDLGDNRQLRTLAPETFQG, KLHALYLYKCGLSALPAGIFGG, SLQYLYLQDNHIEYLQDDIFVD, NLSHLFLHGNKLWSLGQGIFRG, NLDRLLLHENQLQWVHHKAFHD, and RLTTLFLFNNSLTELQGDCLAP. The 52-residue stretch at 255–306 folds into the LRRCT domain; the sequence is NAWDCGCRARSLWEWLRRFRGSSSAVPCATPELRQGQDLKLLRVEDFRNCTG. 2 disordered regions span residues 307 to 377 and 401 to 424; these read PVSP…SGKE and RPKRKGKCARRTPIRAPSGVQQAS. Basic residues-rich tracts occupy residues 352-366 and 401-413; these read GYKKAGKNCTSHRNR and RPKRKGKCARRTP. S424 carries the GPI-anchor amidated serine lipid modification. Residues 424 to 444 traverse the membrane as a helical segment; it reads SSGTALGAPLLAWILGLAVTL. A propeptide spans 425–445 (removed in mature form); that stretch reads SGTALGAPLLAWILGLAVTLR.

It belongs to the Nogo receptor family. In terms of assembly, identified in a complex that contains RTN4R, RTN4RL1 and NGFR; the interaction depends on the presence of chondroitin sulfate proteoglycans. Does not interact with MAG, OMG and RTN4. In terms of tissue distribution, detected in brain (at protein level). Detected in retina ganglion cell layer and inner nuclear layer.

Its subcellular location is the cell membrane. It localises to the membrane raft. The protein localises to the perikaryon. The protein resides in the cell projection. Its function is as follows. Cell surface receptor that plays a functionally redundant role in postnatal brain development and in regulating axon regeneration in the adult central nervous system. Contributes to normal axon migration across the brain midline and normal formation of the corpus callosum. Protects motoneurons against apoptosis; protection against apoptosis is probably mediated by MAG. Plays a role in inhibiting neurite outgrowth and axon regeneration via its binding to neuronal chondroitin sulfate proteoglycans. Binds heparin. Like other family members, plays a role in restricting the number dendritic spines and the number of synapses that are formed during brain development. Signaling mediates activation of Rho and downstream reorganization of the actin cytoskeleton. This Mus musculus (Mouse) protein is Reticulon-4 receptor-like 1.